A 384-amino-acid polypeptide reads, in one-letter code: L-cysteine:1D-myo-inositol 2-amino-2-deoxy-alpha-D-glucopyranoside ligase (384 aa).

C16 is a binding site for Zn(2+). Residues 16–19, T31, and 54–56 each bind L-cysteinyl-5'-AMP; these read CGIT and NVT. Positions 18 to 28 match the 'HIGH' region motif; it reads ITPYDATHLGH. Positions 159–164 match the 'ERGGDP' region motif; that stretch reads QSGGDP. Residue W199 participates in L-cysteinyl-5'-AMP binding. C203 lines the Zn(2+) pocket. Position 221–223 (221–223) interacts with L-cysteinyl-5'-AMP; sequence GSD. H228 provides a ligand contact to Zn(2+). I255 contacts L-cysteinyl-5'-AMP. The 'KMSKS' region motif lies at 261-265; the sequence is KMSKS.

Belongs to the class-I aminoacyl-tRNA synthetase family. MshC subfamily. As to quaternary structure, monomer. Zn(2+) is required as a cofactor.

It catalyses the reaction 1D-myo-inositol 2-amino-2-deoxy-alpha-D-glucopyranoside + L-cysteine + ATP = 1D-myo-inositol 2-(L-cysteinylamino)-2-deoxy-alpha-D-glucopyranoside + AMP + diphosphate + H(+). In terms of biological role, catalyzes the ATP-dependent condensation of GlcN-Ins and L-cysteine to form L-Cys-GlcN-Ins. The polypeptide is L-cysteine:1D-myo-inositol 2-amino-2-deoxy-alpha-D-glucopyranoside ligase (Mycobacterium leprae (strain Br4923)).